The following is an 823-amino-acid chain: Polyadenylation and cleavage factor homolog 11 (823 aa).

In terms of domain architecture, CID spans 3–135 (SVESAARDYR…ELDMKINKLD (133 aa)). Disordered stretches follow at residues 142–176 (NPQT…STST), 188–301 (SSTP…KTLK), 340–395 (SSAP…LPAP), 570–643 (LPAP…EKRS), and 728–755 (WLTP…VASS). Polar residues-rich tracts occupy residues 157–176 (APSQ…STST) and 188–198 (SSTPGAASASK). Residues 200-226 (VVEKTKSPGTVNKEKQVKKEPKQDPLD) show a composition bias toward basic and acidic residues. Low complexity-rich tracts occupy residues 227-242 (KLLP…SSPA) and 342-353 (APPFQHPQQHHP). The segment covering 374–390 (PQDPAPIVPVQAPPPQQ) has biased composition (pro residues). Positions 571–581 (PAPARSPSSPR) are enriched in low complexity. Positions 609 to 624 (QPQQNARWGGANKQQN) are enriched in polar residues.

This is Polyadenylation and cleavage factor homolog 11 (pcf-11) from Caenorhabditis elegans.